A 501-amino-acid chain; its full sequence is Lysine--tRNA ligase (501 aa).

Glutamate 404 and glutamate 411 together coordinate Mg(2+).

The protein belongs to the class-II aminoacyl-tRNA synthetase family. In terms of assembly, homodimer. Mg(2+) serves as cofactor.

Its subcellular location is the cytoplasm. It catalyses the reaction tRNA(Lys) + L-lysine + ATP = L-lysyl-tRNA(Lys) + AMP + diphosphate. The polypeptide is Lysine--tRNA ligase (lysS) (Campylobacter jejuni subsp. jejuni serotype O:2 (strain ATCC 700819 / NCTC 11168)).